The chain runs to 234 residues: 2,3,4,5-tetrahydropyridine-2,6-dicarboxylate N-acetyltransferase (234 aa).

Belongs to the transferase hexapeptide repeat family. DapH subfamily.

The enzyme catalyses (S)-2,3,4,5-tetrahydrodipicolinate + acetyl-CoA + H2O = L-2-acetamido-6-oxoheptanedioate + CoA. The protein operates within amino-acid biosynthesis; L-lysine biosynthesis via DAP pathway; LL-2,6-diaminopimelate from (S)-tetrahydrodipicolinate (acetylase route): step 1/3. Catalyzes the transfer of an acetyl group from acetyl-CoA to tetrahydrodipicolinate. This Ligilactobacillus salivarius (strain UCC118) (Lactobacillus salivarius) protein is 2,3,4,5-tetrahydropyridine-2,6-dicarboxylate N-acetyltransferase.